Consider the following 1481-residue polypeptide: Cystic fibrosis transmembrane conductance regulator (1481 aa).

Residues 1 to 77 (MQRSPLEKAS…KLINALRRCF (77 aa)) lie on the Cytoplasmic side of the membrane. A helical membrane pass occupies residues 78–98 (FWRFMFYGIILYLGEVTKAVQ). The 285-residue stretch at 81–365 (FMFYGIILYL…WAVQTWYDSL (285 aa)) folds into the ABC transmembrane type-1 1 domain. Residues 99–122 (PLLLGRIIASYDPDNKVERSIAIY) are Extracellular-facing. The chain crosses the membrane as a helical span at residues 123-146 (LGIGLCLLFIVRTLLLHPAIFGLH). Residues 147 to 195 (HIGMQMRIAMFSLIYKKTLKLSSRVLDKISIGQLVSLLSNNLNKFDEGL) lie on the Cytoplasmic side of the membrane. A helical membrane pass occupies residues 196 to 216 (ALAHFVWIAPLQVTLLMGLLW). Over 217 to 222 (ELLQAF) the chain is Extracellular. Residues 223 to 243 (TFCGLAFLIVLALLQAGLGKM) traverse the membrane as a helical segment. The Cytoplasmic portion of the chain corresponds to 244–298 (MMKYRDQRAGKINERLVITSEMIENIQSVKAYCWEEAMEKIIENLRQTELKLTRK). Residues 299–319 (AAYVRYLNSSAFFFSGFFVVF) traverse the membrane as a helical segment. Residues 320 to 339 (LSVLPYALLKGIILRKIFTT) are Extracellular-facing. A helical transmembrane segment spans residues 340 to 358 (ISFCIVLRMAVTRQFPWAV). Over 359-858 (QTWYDSLGAI…YLRYITVHKS (500 aa)) the chain is Cytoplasmic. ATP-binding positions include Trp401, 457–464 (GSTGAGKT), and Gln492. An ABC transporter 1 domain is found at 423-645 (NGDNSLFFSN…RPDFSSKLMG (223 aa)). A lipid anchor (S-palmitoyl cysteine) is attached at Cys523. The residue at position 548 (Ser548) is a Phosphoserine. The segment at 653–831 (TAERRNSIIT…EEINEEDLRD (179 aa)) is disordered R region. Ser659 and Ser669 each carry phosphoserine; by PKA. Phosphoserine; by PKC is present on Ser685. A Glycyl lysine isopeptide (Lys-Gly) (interchain with G-Cter in ubiquitin) cross-link involves residue Lys687. Ser699 bears the Phosphoserine; by PKA mark. Position 711 is a phosphoserine (Ser711). Thr716 is subject to Phosphothreonine. Phosphoserine; by PKA occurs at positions 736 and 767. Ser790 carries the phosphoserine; by PKC modification. Residues Ser795 and Ser813 each carry the phosphoserine; by PKA modification. Residues 859 to 879 (LMFVLIWCLVVFLVEVAASLV) traverse the membrane as a helical segment. Residues 859 to 1155 (LMFVLIWCLV…AVNSSIDVDS (297 aa)) form the ABC transmembrane type-1 2 domain. Topologically, residues 880–918 (VLCLFPKIFFQDKGNSTKSANNSYAVIITSTSSYYIFYI) are extracellular. Asn894 and Asn900 each carry an N-linked (GlcNAc...) asparagine glycan. The chain crosses the membrane as a discontinuously helical span at residues 919 to 939 (YVGVADTLLALGLFRGLPLVH). Over 940–990 (TLITVSKTLHHKMLQSVLQAPMSTLNTLKTGGILNRFSKDIAVLDDLLPLT) the chain is Cytoplasmic. A helical transmembrane segment spans residues 991–1011 (IFDFVQLLLIVIGAVVVVSVL). Residues 1012–1013 (QP) are Extracellular-facing. A helical transmembrane segment spans residues 1014–1034 (YIFLATVPVIAAFILLRAYFL). Residues 1035–1095 (HTSQQLKQLE…TANWFLYLST (61 aa)) are Cytoplasmic-facing. A helical membrane pass occupies residues 1096-1116 (LRWFQMRIEMIFVIFFIAVTF). Residues 1117–1130 (ISILTTGEGEGRVG) lie on the Extracellular side of the membrane. The helical transmembrane segment at 1131 to 1151 (IILTLAMNIMGTLQWAVNSSI) threads the bilayer. At 1152 to 1481 (DVDSLMRSVS…TEEEVQETKL (330 aa)) the chain is on the cytoplasmic side. Positions 1211 to 1444 (MTVKDLTAKY…KSLFRQAISP (234 aa)) constitute an ABC transporter 2 domain. Residues Tyr1220 and 1245–1252 (GRTGSGKS) each bind ATP. An interaction with GORASP2 region spans residues 1387-1481 (RTLKQAFANC…TEEEVQETKL (95 aa)). Residue Cys1396 is the site of S-palmitoyl cysteine attachment. The interval 1453 to 1481 (HRNSSRQRSRSNIAALKEETEEEVQETKL) is disordered. Position 1457 is a phosphoserine (Ser1457). The span at 1471-1481 (ETEEEVQETKL) shows a compositional bias: acidic residues. The PDZ-binding motif lies at 1479-1481 (TKL).

It belongs to the ABC transporter superfamily. ABCC family. CFTR transporter (TC 3.A.1.202) subfamily. As to quaternary structure, monomer; does not require oligomerization for channel activity. May form oligomers in the membrane. Interacts with SLC26A3, SLC26A6 and NHERF1. Interacts with SHANK2. Interacts with MYO6. Interacts (via C-terminus) with GOPC (via PDZ domain); this promotes CFTR internalization and thereby decreases channel activity. Interacts with SLC4A7 through NHERF1. Found in a complex with MYO5B and RAB11A. Interacts with ANO1. Interacts with SLC26A8. Interacts with AHCYL1; the interaction increases CFTR activity. Interacts with CSE1L. The core-glycosylated form interacts with GORASP2 (via PDZ GRASP-type 1 domain) in respone to ER stress. Interacts with MARCHF2; the interaction leads to CFTR ubiqtuitination and degradation. Interacts with ADGRG2. N-glycosylated. In terms of processing, phosphorylated; cAMP treatment promotes phosphorylation and activates the channel. Dephosphorylation decreases the ATPase activity (in vitro). Phosphorylation at PKA sites activates the channel. Phosphorylation at PKC sites enhances the response to phosphorylation by PKA. Phosphorylated by AMPK; this inhibits channel activity. Post-translationally, ubiquitinated, leading to its degradation in the lysosome. Deubiquitination by USP10 in early endosomes enhances its endocytic recycling to the cell membrane. Ubiquitinated by RNF185 during ER stress. Ubiquitinated by MARCHF2.

The protein resides in the apical cell membrane. It localises to the early endosome membrane. Its subcellular location is the cell membrane. It is found in the recycling endosome membrane. The protein localises to the endoplasmic reticulum membrane. The protein resides in the nucleus. It carries out the reaction ATP + H2O + closed Cl(-) channel = ADP + phosphate + open Cl(-) channel.. It catalyses the reaction chloride(in) = chloride(out). The catalysed reaction is hydrogencarbonate(in) = hydrogencarbonate(out). The enzyme catalyses ATP + H2O = ADP + phosphate + H(+). In terms of biological role, epithelial ion channel that plays an important role in the regulation of epithelial ion and water transport and fluid homeostasis. Mediates the transport of chloride ions across the cell membrane. Possesses an intrinsic ATPase activity and utilizes ATP to gate its channel; the passive flow of anions through the channel is gated by cycles of ATP binding and hydrolysis by the ATP-binding domains. The ion channel is also permeable to HCO(3)(-); selectivity depends on the extracellular chloride concentration. Exerts its function also by modulating the activity of other ion channels and transporters. Contributes to the regulation of the pH and the ion content of the epithelial fluid layer. Modulates the activity of the epithelial sodium channel (ENaC) complex, in part by regulating the cell surface expression of the ENaC complex. May regulate bicarbonate secretion and salvage in epithelial cells by regulating the transporter SLC4A7. Can inhibit the chloride channel activity of ANO1. Plays a role in the chloride and bicarbonate homeostasis during sperm epididymal maturation and capacitation. The sequence is that of Cystic fibrosis transmembrane conductance regulator from Bos taurus (Bovine).